We begin with the raw amino-acid sequence, 432 residues long: Adenylosuccinate synthetase (432 aa).

GTP-binding positions include 13–19 (GDEGKGK) and 41–43 (GHT). The active-site Proton acceptor is the Asp-14. 2 residues coordinate Mg(2+): Asp-14 and Gly-41. Residues 14 to 17 (DEGK), 39 to 42 (NAGH), Thr-130, Arg-144, Gln-225, Thr-240, and Arg-304 each bind IMP. The active-site Proton donor is His-42. Residue 300–306 (ATTGRRR) participates in substrate binding. GTP-binding positions include Arg-306, 332-334 (KLD), and 415-417 (STG).

This sequence belongs to the adenylosuccinate synthetase family. As to quaternary structure, homodimer. Mg(2+) is required as a cofactor.

Its subcellular location is the cytoplasm. It carries out the reaction IMP + L-aspartate + GTP = N(6)-(1,2-dicarboxyethyl)-AMP + GDP + phosphate + 2 H(+). It participates in purine metabolism; AMP biosynthesis via de novo pathway; AMP from IMP: step 1/2. Plays an important role in the de novo pathway of purine nucleotide biosynthesis. Catalyzes the first committed step in the biosynthesis of AMP from IMP. The protein is Adenylosuccinate synthetase of Salmonella agona (strain SL483).